Reading from the N-terminus, the 189-residue chain is Ribosome maturation factor RimP (189 aa).

Belongs to the RimP family.

It is found in the cytoplasm. In terms of biological role, required for maturation of 30S ribosomal subunits. In Mycobacteroides abscessus (strain ATCC 19977 / DSM 44196 / CCUG 20993 / CIP 104536 / JCM 13569 / NCTC 13031 / TMC 1543 / L948) (Mycobacterium abscessus), this protein is Ribosome maturation factor RimP.